Consider the following 321-residue polypeptide: Putative ankyrin repeat domain-containing protein 26-like protein (321 aa).

ANK repeat units follow at residues lysine 48–glutamate 78, lysine 82–valine 111, lysine 115–leucine 144, tyrosine 148–serine 177, and aspartate 181–alanine 210. Disordered regions lie at residues glutamate 222 to asparagine 242 and phenylalanine 268 to isoleucine 321. Polar residues predominate over residues proline 229 to asparagine 242.

The polypeptide is Putative ankyrin repeat domain-containing protein 26-like protein (ANKRD26P1) (Homo sapiens (Human)).